We begin with the raw amino-acid sequence, 215 residues long: Oligoribonuclease (215 aa).

One can recognise an Exonuclease domain in the interval 5–170; that stretch reads LVWIDCEMTG…ADIHESIREL (166 aa). Residue Y127 is part of the active site. Positions 196–215 are disordered; the sequence is LDEGKDAPGPSDSASAPPTG. Residues 202–215 show a composition bias toward low complexity; that stretch reads APGPSDSASAPPTG.

The protein belongs to the oligoribonuclease family.

It is found in the cytoplasm. Its function is as follows. 3'-to-5' exoribonuclease specific for small oligoribonucleotides. This is Oligoribonuclease from Mycolicibacterium paratuberculosis (strain ATCC BAA-968 / K-10) (Mycobacterium paratuberculosis).